Here is a 374-residue protein sequence, read N- to C-terminus: Queuine tRNA-ribosyltransferase (374 aa).

Asp89 functions as the Proton acceptor in the catalytic mechanism. Substrate-binding positions include 89–93, Asp143, Gln187, and Gly214; that span reads DSGGF. The interval 245 to 251 is RNA binding; sequence GVGKPED. The active-site Nucleophile is the Asp264. The segment at 269-273 is RNA binding; important for wobble base 34 recognition; that stretch reads TRNAR. Zn(2+) contacts are provided by Cys302, Cys304, Cys307, and His333.

Belongs to the queuine tRNA-ribosyltransferase family. In terms of assembly, homodimer. Within each dimer, one monomer is responsible for RNA recognition and catalysis, while the other monomer binds to the replacement base PreQ1. Zn(2+) is required as a cofactor.

It carries out the reaction 7-aminomethyl-7-carbaguanine + guanosine(34) in tRNA = 7-aminomethyl-7-carbaguanosine(34) in tRNA + guanine. The protein operates within tRNA modification; tRNA-queuosine biosynthesis. Functionally, catalyzes the base-exchange of a guanine (G) residue with the queuine precursor 7-aminomethyl-7-deazaguanine (PreQ1) at position 34 (anticodon wobble position) in tRNAs with GU(N) anticodons (tRNA-Asp, -Asn, -His and -Tyr). Catalysis occurs through a double-displacement mechanism. The nucleophile active site attacks the C1' of nucleotide 34 to detach the guanine base from the RNA, forming a covalent enzyme-RNA intermediate. The proton acceptor active site deprotonates the incoming PreQ1, allowing a nucleophilic attack on the C1' of the ribose to form the product. After dissociation, two additional enzymatic reactions on the tRNA convert PreQ1 to queuine (Q), resulting in the hypermodified nucleoside queuosine (7-(((4,5-cis-dihydroxy-2-cyclopenten-1-yl)amino)methyl)-7-deazaguanosine). The protein is Queuine tRNA-ribosyltransferase of Psychromonas ingrahamii (strain DSM 17664 / CCUG 51855 / 37).